Reading from the N-terminus, the 283-residue chain is Nicotine 6-hydroxylase medium subunit (283 aa).

Residues 1–176 form the FAD-binding PCMH-type domain; it reads MKLPAIRYAS…TDVWIPSRPN (176 aa). Residues 31–35 and 110–114 each bind FAD; these read AGGQS and TLGGS.

Heterotrimer composed of a large subunit (NdhL), a medium subunit (NdhM) and a small subunit (NdhS). The cofactor is FAD.

It is found in the cytoplasm. It catalyses the reaction (R)-nicotine + A + H2O = (R)-6-hydroxynicotine + AH2. The catalysed reaction is (S)-nicotine + A + H2O = (S)-6-hydroxynicotine + AH2. It participates in alkaloid degradation; nicotine degradation; 6-hydroxypseudooxynicotine from nicotine (R-isomer route): step 1/2. Its pathway is alkaloid degradation; nicotine degradation; 6-hydroxypseudooxynicotine from nicotine (S-isomer route): step 1/2. With respect to regulation, nicotine dehydrogenase activity is inhibited by tungsten. In terms of biological role, component of the nicotine 6-hydroxylase, which is involved in the degradation of nicotine. Catalyzes the hydroxylation of the pyridine ring at C6 to form 6-hydroxynicotine. Can use both L-nicotine and D-nicotine. The chain is Nicotine 6-hydroxylase medium subunit from Paenarthrobacter nicotinovorans (Arthrobacter nicotinovorans).